Consider the following 207-residue polypeptide: Low-molecular weight cobalt-containing nitrile hydratase subunit alpha (207 aa).

Co(3+) is bound by residues cysteine 109, cysteine 112, serine 113, and cysteine 114.

The protein belongs to the nitrile hydratase subunit alpha family. As to quaternary structure, heterodimer of an alpha and a beta chain. It depends on Co(3+) as a cofactor.

It carries out the reaction an aliphatic primary amide = an aliphatic nitrile + H2O. Functionally, NHase catalyzes the hydration of various nitrile compounds to the corresponding amides. The protein is Low-molecular weight cobalt-containing nitrile hydratase subunit alpha of Rhodococcus rhodochrous.